The chain runs to 546 residues: Carotenoid 9,10(9',10')-cleavage dioxygenase (546 aa).

Residues histidine 226, histidine 274, histidine 340, and histidine 530 each coordinate Fe cation.

This sequence belongs to the carotenoid oxygenase family. Fe(2+) is required as a cofactor. In terms of tissue distribution, in vegetative and floral tissues.

The protein resides in the cytoplasm. The enzyme catalyses all-trans-zeaxanthin + 2 O2 = 4,9-dimethyldodeca-2,4,6,8,10-pentaenedial + 2 (3R)-hydroxy-beta-ionone. Functionally, cleaves a variety of carotenoids symmetrically at both the 9-10 and 9'-10' double bonds. Catalyzes the formation of 4,9-dimethyldodeca-2,4,6,8,10-pentaene-1,12-dialdehyde and probably hydroxydihydro-beta-ionone from zeaxanthin. This is Carotenoid 9,10(9',10')-cleavage dioxygenase (CCD) from Crocus sativus (Saffron).